Consider the following 671-residue polypeptide: DNA ligase (671 aa).

Residues D32–D36, S81–L82, and E113 each bind NAD(+). Catalysis depends on K115, which acts as the N6-AMP-lysine intermediate. The NAD(+) site is built by R136, E173, K290, and K314. Zn(2+)-binding residues include C408, C411, C426, and C432. A BRCT domain is found at E593–S671.

The protein belongs to the NAD-dependent DNA ligase family. LigA subfamily. Mg(2+) serves as cofactor. It depends on Mn(2+) as a cofactor.

It catalyses the reaction NAD(+) + (deoxyribonucleotide)n-3'-hydroxyl + 5'-phospho-(deoxyribonucleotide)m = (deoxyribonucleotide)n+m + AMP + beta-nicotinamide D-nucleotide.. In terms of biological role, DNA ligase that catalyzes the formation of phosphodiester linkages between 5'-phosphoryl and 3'-hydroxyl groups in double-stranded DNA using NAD as a coenzyme and as the energy source for the reaction. It is essential for DNA replication and repair of damaged DNA. The chain is DNA ligase from Escherichia coli O7:K1 (strain IAI39 / ExPEC).